An 84-amino-acid chain; its full sequence is U8-theraphotoxin-Hhn1a (84 aa).

The N-terminal stretch at 1-21 (MKVVLLECLVWMMAMMELVSC) is a signal peptide. Cystine bridges form between Cys23–Cys35, Cys29–Cys44, Cys34–Cys67, Cys54–Cys75, and Cys69–Cys81.

This sequence belongs to the AVIT (prokineticin) family. In terms of tissue distribution, expressed by the venom gland.

The protein resides in the secreted. In Cyriopagopus hainanus (Chinese bird spider), this protein is U8-theraphotoxin-Hhn1a.